The sequence spans 363 residues: tRNA (guanine(26)-N(2))-dimethyltransferase (363 aa).

Positions 5-352 (VLRREGGVKF…GEYGEVLMAF (348 aa)) constitute a Trm1 methyltransferase domain. S-adenosyl-L-methionine-binding residues include arginine 40, arginine 67, aspartate 85, aspartate 111, and alanine 112.

Belongs to the class I-like SAM-binding methyltransferase superfamily. Trm1 family.

The catalysed reaction is guanosine(26) in tRNA + 2 S-adenosyl-L-methionine = N(2)-dimethylguanosine(26) in tRNA + 2 S-adenosyl-L-homocysteine + 2 H(+). Its function is as follows. Dimethylates a single guanine residue at position 26 of a number of tRNAs using S-adenosyl-L-methionine as donor of the methyl groups. This is tRNA (guanine(26)-N(2))-dimethyltransferase from Pyrobaculum aerophilum (strain ATCC 51768 / DSM 7523 / JCM 9630 / CIP 104966 / NBRC 100827 / IM2).